The following is a 256-amino-acid chain: MVALRLIPCLDVARGRVVKGVNFVGLRDAGDPVELACRYSGAGADELVFLDIAASHEGRGTLIDMVHRTAESVTIPFTVGGGISTVEGITDLLRAGADKVSLNSSAVRRPELVREGAERFGCQCIVVAIDARRRDGDGWDVFVKGGRENTGLDAVDWARRVAELGAGEILLTSMDGDGTQAGYDLALTRAVADAVPVPVIASGGAGCIDHIAQALETGPDGGHASAALLASLLHDGVLTVEEIKQDLLARGLSIRP.

Residues aspartate 11 and aspartate 130 contribute to the active site.

The protein belongs to the HisA/HisF family. Heterodimer of HisH and HisF.

It localises to the cytoplasm. It carries out the reaction 5-[(5-phospho-1-deoxy-D-ribulos-1-ylimino)methylamino]-1-(5-phospho-beta-D-ribosyl)imidazole-4-carboxamide + L-glutamine = D-erythro-1-(imidazol-4-yl)glycerol 3-phosphate + 5-amino-1-(5-phospho-beta-D-ribosyl)imidazole-4-carboxamide + L-glutamate + H(+). It functions in the pathway amino-acid biosynthesis; L-histidine biosynthesis; L-histidine from 5-phospho-alpha-D-ribose 1-diphosphate: step 5/9. Functionally, IGPS catalyzes the conversion of PRFAR and glutamine to IGP, AICAR and glutamate. The HisF subunit catalyzes the cyclization activity that produces IGP and AICAR from PRFAR using the ammonia provided by the HisH subunit. The protein is Imidazole glycerol phosphate synthase subunit hisF1 (hisF1) of Parasynechococcus marenigrum (strain WH8102).